The primary structure comprises 553 residues: CDP-diacylglycerol--glycerol-3-phosphate 3-phosphatidyltransferase, mitochondrial (553 aa).

The transit peptide at M1–A25 directs the protein to the mitochondrion. S46 is modified (phosphoserine). Residue A121–G128 coordinates ATP. 2 consecutive PLD phosphodiesterase domains span residues T212–Y238 and T457–S490. Residues H217, K219, and D224 contribute to the active site.

The protein belongs to the CDP-alcohol phosphatidyltransferase class-II family.

The protein localises to the mitochondrion. It carries out the reaction a CDP-1,2-diacyl-sn-glycerol + sn-glycerol 3-phosphate = a 1,2-diacyl-sn-glycero-3-phospho-(1'-sn-glycero-3'-phosphate) + CMP + H(+). It participates in phospholipid metabolism; phosphatidylglycerol biosynthesis; phosphatidylglycerol from CDP-diacylglycerol: step 1/2. Its activity is regulated as follows. Activated by calcium and magnesium and inhibited by other bivalent cations. In terms of biological role, functions in the biosynthesis of the anionic phospholipids phosphatidylglycerol and cardiolipin. The chain is CDP-diacylglycerol--glycerol-3-phosphate 3-phosphatidyltransferase, mitochondrial (PGS1) from Cricetulus griseus (Chinese hamster).